A 43-amino-acid chain; its full sequence is Protein PsbN (43 aa).

The chain crosses the membrane as a helical span at residues 5 to 27 (TLIAISISGLIVSFTGYALYTAF).

This sequence belongs to the PsbN family.

It is found in the plastid. It localises to the chloroplast thylakoid membrane. Functionally, may play a role in photosystem I and II biogenesis. This is Protein PsbN from Cicer arietinum (Chickpea).